A 221-amino-acid polypeptide reads, in one-letter code: GTP cyclohydrolase 1 (221 aa).

Positions 109, 112, and 180 each coordinate Zn(2+).

Belongs to the GTP cyclohydrolase I family. Toroid-shaped homodecamer, composed of two pentamers of five dimers.

The catalysed reaction is GTP + H2O = 7,8-dihydroneopterin 3'-triphosphate + formate + H(+). Its pathway is cofactor biosynthesis; 7,8-dihydroneopterin triphosphate biosynthesis; 7,8-dihydroneopterin triphosphate from GTP: step 1/1. This chain is GTP cyclohydrolase 1, found in Serratia proteamaculans (strain 568).